Reading from the N-terminus, the 78-residue chain is Acyl carrier protein (78 aa).

One can recognise a Carrier domain in the interval 1 to 76; that stretch reads MALFEDIQAV…DVVKYIEDNK (76 aa). Serine 36 is subject to O-(pantetheine 4'-phosphoryl)serine.

The protein belongs to the acyl carrier protein (ACP) family. Post-translationally, 4'-phosphopantetheine is transferred from CoA to a specific serine of apo-ACP by AcpS. This modification is essential for activity because fatty acids are bound in thioester linkage to the sulfhydryl of the prosthetic group.

It localises to the cytoplasm. It participates in lipid metabolism; fatty acid biosynthesis. Its function is as follows. Carrier of the growing fatty acid chain in fatty acid biosynthesis. The sequence is that of Acyl carrier protein from Helicobacter pylori (strain ATCC 700392 / 26695) (Campylobacter pylori).